The chain runs to 169 residues: MLYSKKKEFVKFLEGIYKNANTIVAIHYHGLTVAQLTQIRKDLRVSGARLKIVKNTLAKIAVANLKIKQADIFSGPIAIAYSEDYITVPKVILRFADQYPSLKVVGGFVDQKVATMNDIEQLASLATSESHKGNFLSLLQIPIRRFATVSHAPLVKLVTILKNYVNNKS.

This sequence belongs to the universal ribosomal protein uL10 family. In terms of assembly, part of the ribosomal stalk of the 50S ribosomal subunit. The N-terminus interacts with L11 and the large rRNA to form the base of the stalk. The C-terminus forms an elongated spine to which L12 dimers bind in a sequential fashion forming a multimeric L10(L12)X complex.

Functionally, forms part of the ribosomal stalk, playing a central role in the interaction of the ribosome with GTP-bound translation factors. This Orientia tsutsugamushi (strain Boryong) (Rickettsia tsutsugamushi) protein is Large ribosomal subunit protein uL10.